The primary structure comprises 160 residues: MRVVVIAIGRLKQGPERELAERYRERFDDLGRKLGFRGPEIHEIGESRARDAPTRIAEEAAAIAALIPDKAVLVTLDERGDSLDSAGFARKLGGWRDQSTAQAIFVIGGADGLSPELRRKAKLSVSFGAATWPHQMVRVMLLEQLYRAATILSGHPYHRA.

S-adenosyl-L-methionine contacts are provided by Leu76 and Gly108.

The protein belongs to the RNA methyltransferase RlmH family. In terms of assembly, homodimer.

Its subcellular location is the cytoplasm. It carries out the reaction pseudouridine(1915) in 23S rRNA + S-adenosyl-L-methionine = N(3)-methylpseudouridine(1915) in 23S rRNA + S-adenosyl-L-homocysteine + H(+). Functionally, specifically methylates the pseudouridine at position 1915 (m3Psi1915) in 23S rRNA. The protein is Ribosomal RNA large subunit methyltransferase H of Rhodopseudomonas palustris (strain BisB18).